A 247-amino-acid chain; its full sequence is NAD(P)H-quinone oxidoreductase subunit K, chloroplastic (247 aa).

Residues Cys64, Cys65, Cys129, and Cys160 each contribute to the [4Fe-4S] cluster site.

The protein belongs to the complex I 20 kDa subunit family. In terms of assembly, NDH is composed of at least 16 different subunits, 5 of which are encoded in the nucleus. Requires [4Fe-4S] cluster as cofactor.

It localises to the plastid. It is found in the chloroplast thylakoid membrane. It catalyses the reaction a plastoquinone + NADH + (n+1) H(+)(in) = a plastoquinol + NAD(+) + n H(+)(out). It carries out the reaction a plastoquinone + NADPH + (n+1) H(+)(in) = a plastoquinol + NADP(+) + n H(+)(out). Functionally, NDH shuttles electrons from NAD(P)H:plastoquinone, via FMN and iron-sulfur (Fe-S) centers, to quinones in the photosynthetic chain and possibly in a chloroplast respiratory chain. The immediate electron acceptor for the enzyme in this species is believed to be plastoquinone. Couples the redox reaction to proton translocation, and thus conserves the redox energy in a proton gradient. The sequence is that of NAD(P)H-quinone oxidoreductase subunit K, chloroplastic from Mesostigma viride (Green alga).